Consider the following 529-residue polypeptide: [Pyruvate dehydrogenase [acetyl-transferring]]-phosphatase 2, mitochondrial (529 aa).

Residues 1 to 66 (MSSTVSYWIL…FTLCKAYRHT (66 aa)) constitute a mitochondrion transit peptide. Residues 106 to 517 (VLRFESNQLA…DDITVTVVYF (412 aa)) enclose the PPM-type phosphatase domain. 4 residues coordinate Mn(2+): aspartate 141, glycine 142, aspartate 412, and aspartate 508.

It belongs to the PP2C family. Mg(2+) is required as a cofactor.

It is found in the mitochondrion. The enzyme catalyses O-phospho-L-seryl-[pyruvate dehydrogenase E1 alpha subunit] + H2O = L-seryl-[pyruvate dehydrogenase E1 alpha subunit] + phosphate. Its function is as follows. Mitochondrial enzyme that catalyzes the dephosphorylation and concomitant reactivation of the alpha subunit of the E1 component of the pyruvate dehydrogenase complex (PDC), thereby stimulating the conversion of pyruvate into acetyl-CoA. Acts as a crucial regulator of T cell metabolism and function, with a particular focus on T-helper Th17. The protein is [Pyruvate dehydrogenase [acetyl-transferring]]-phosphatase 2, mitochondrial of Homo sapiens (Human).